The following is a 483-amino-acid chain: Protein DETOXIFICATION 6 (483 aa).

The next 12 membrane-spanning stretches (helical) occupy residues 38-58 (ALPMATVTVAQYLLPVISVMV), 69-89 (GVALATSFTNVSGFSVMFGLA), 113-133 (FSAIVSNVPIVVLISILWFYM), 146-166 (ISKVAGSYAVCLIPALLAQAV), 187-207 (AITTLLFHIPVCLILVYAFGL), 211-231 (GAALAIGLSYWFNVLILALYV), 263-283 (AAMTTIEWSLFEFLILSSGLL), 292-312 (VLSICLTTSSLHYVIPMGIGA), 334-354 (VFAGIFLWFLEATICSTLLFI), 376-396 (LSPLLCISFLVDGFSAVLGGV), 405-425 (IGAWANVVAYYLLGAPVGLFL), and 436-456 (LWIGVVVGSTAQGIILAIVTA).

The protein belongs to the multi antimicrobial extrusion (MATE) (TC 2.A.66.1) family.

Its subcellular location is the membrane. This is Protein DETOXIFICATION 6 from Arabidopsis thaliana (Mouse-ear cress).